A 534-amino-acid polypeptide reads, in one-letter code: NAD(P)H-quinone oxidoreductase chain 4 2 (534 aa).

Helical transmembrane passes span 6 to 26 (FPWL…IPLL), 38 to 58 (WYSL…FWTS), 93 to 113 (LILL…PVTF), 117 to 137 (FFYF…AVQD), 138 to 158 (LLVF…LLAI), 171 to 191 (FILY…AMAF), 210 to 230 (IGFQ…KLPI), 245 to 265 (TAPV…YALF), 279 to 299 (FAPI…LTSF), 313 to 333 (ISHM…GLSG), 335 to 355 (MLQM…VGAT), 377 to 399 (MFAM…GFVA), and 419 to 439 (VVVI…LLSM).

It belongs to the complex I subunit 4 family.

Its subcellular location is the cellular thylakoid membrane. The catalysed reaction is a plastoquinone + NADH + (n+1) H(+)(in) = a plastoquinol + NAD(+) + n H(+)(out). The enzyme catalyses a plastoquinone + NADPH + (n+1) H(+)(in) = a plastoquinol + NADP(+) + n H(+)(out). Functionally, NDH-1 shuttles electrons from NAD(P)H, via FMN and iron-sulfur (Fe-S) centers, to quinones in the respiratory chain. The immediate electron acceptor for the enzyme in this species is believed to be plastoquinone. Couples the redox reaction to proton translocation (for every two electrons transferred, four hydrogen ions are translocated across the cytoplasmic membrane), and thus conserves the redox energy in a proton gradient. This is NAD(P)H-quinone oxidoreductase chain 4 2 from Synechococcus elongatus (strain ATCC 33912 / PCC 7942 / FACHB-805) (Anacystis nidulans R2).